Reading from the N-terminus, the 759-residue chain is Protein AKNAD1 (759 aa).

A disordered region spans residues 169–246; the sequence is TDQLNPKKDG…HTEKASSGNR (78 aa). The segment covering 181-192 has biased composition (polar residues); the sequence is SNKPGSPTMTEE. Residues 371–482 adopt a coiled-coil conformation; the sequence is QKISQGKQMC…EDVKDKVDES (112 aa). Over residues 484-496 the composition is skewed to polar residues; the sequence is YTSAPSLPVSSPV. Disordered regions lie at residues 484–543, 634–654, 678–723, and 735–759; these read YTSA…QEAP, EKAP…FCSD, CRKE…PSLA, and PDTS…MKSQ. Residues 497–509 show a composition bias toward low complexity; the sequence is TLDDLASTSSSLS. Residues 639–654 are compositionally biased toward polar residues; that stretch reads SDSTPNSDTGHSFCSD. Positions 679–688 are enriched in basic and acidic residues; sequence RKEPPKEFHY. The segment covering 735 to 744 has biased composition (polar residues); that stretch reads PDTSKSSPTP.

The protein belongs to the AKNA family.

In Macaca fascicularis (Crab-eating macaque), this protein is Protein AKNAD1 (AKNAD1).